Reading from the N-terminus, the 298-residue chain is uncharacterized protein (298 aa).

A disordered region spans residues 264–298 (APPPPLPCITTGPAALEDSPKASKANKGKKAKAKK). Residues 287-298 (KANKGKKAKAKK) are compositionally biased toward basic residues.

This is an uncharacterized protein from Mus musculus (Mouse).